Reading from the N-terminus, the 314-residue chain is Serine/threonine-protein phosphatase PP-Y (314 aa).

Mn(2+) contacts are provided by aspartate 60, histidine 62, aspartate 88, and asparagine 120. Histidine 121 serves as the catalytic Proton donor. Residues histidine 169 and histidine 244 each coordinate Mn(2+).

It belongs to the PPP phosphatase family. PP-Y subfamily. It depends on Mn(2+) as a cofactor.

The catalysed reaction is O-phospho-L-seryl-[protein] + H2O = L-seryl-[protein] + phosphate. It catalyses the reaction O-phospho-L-threonyl-[protein] + H2O = L-threonyl-[protein] + phosphate. The sequence is that of Serine/threonine-protein phosphatase PP-Y (PpY-55A) from Drosophila melanogaster (Fruit fly).